The sequence spans 242 residues: 1-(5-phosphoribosyl)-5-[(5-phosphoribosylamino)methylideneamino] imidazole-4-carboxamide isomerase (242 aa).

The active-site Proton acceptor is the D10. D132 functions as the Proton donor in the catalytic mechanism.

It belongs to the HisA/HisF family.

It localises to the cytoplasm. It carries out the reaction 1-(5-phospho-beta-D-ribosyl)-5-[(5-phospho-beta-D-ribosylamino)methylideneamino]imidazole-4-carboxamide = 5-[(5-phospho-1-deoxy-D-ribulos-1-ylimino)methylamino]-1-(5-phospho-beta-D-ribosyl)imidazole-4-carboxamide. The protein operates within amino-acid biosynthesis; L-histidine biosynthesis; L-histidine from 5-phospho-alpha-D-ribose 1-diphosphate: step 4/9. The sequence is that of 1-(5-phosphoribosyl)-5-[(5-phosphoribosylamino)methylideneamino] imidazole-4-carboxamide isomerase from Methanothrix thermoacetophila (strain DSM 6194 / JCM 14653 / NBRC 101360 / PT) (Methanosaeta thermophila).